Reading from the N-terminus, the 399-residue chain is O-antigen polymerase (399 aa).

10 helical membrane-spanning segments follow: residues 4 to 24 (FPPGAILRDVLNVFFVALVLV), 37 to 57 (LVFTIFSWSAVILWVIALTIF), 64 to 84 (AIMGGRSYILFPAVFIALVIL), 97 to 117 (IVCYIIFLMFMVATISIIDVL), 151 to 171 (GGFSDALNFGYMLTLGVLLCM), 185 to 205 (IISFVLFIAICMSLTRGAILV), 222 to 242 (FCGITLFVIIIPVLAISTNIF), 309 to 329 (FFWIALETGIIGLIINIIYLA), 353 to 373 (LYFLFGSIYFISAALSSAPSS), and 374 to 394 (STFSIYYWTVLALIPFLKLTN).

The protein resides in the cell inner membrane. The catalysed reaction is n lipid-linked O-antigen repeat units = a lipid-linked O antigen + (n-1) polyisoprenyl diphosphate.. It participates in bacterial outer membrane biogenesis; LPS O-antigen biosynthesis. Polymerase involved in the biosynthesis of the lipopolysaccharide (LPS). Catalyzes the polymerization of the O-antigen repeat units on the periplasmic face of the inner membrane, leading to the formation of the lipid-linked O-antigen molecule. The sequence is that of O-antigen polymerase from Salmonella muenchen.